The primary structure comprises 217 residues: C-type lectin domain family 2 member I (217 aa).

At 1 to 53 (MPDCLETGEKLFVHNMNAQCVQKPEEGNGPLGTGGKIVQGKCFRIISTVSPVK) the chain is on the cytoplasmic side. The chain crosses the membrane as a helical; Signal-anchor for type II membrane protein span at residues 54-74 (LYCCYGVIMVLTVAVIALSVA). Residues 75–217 (LSTKKTEQII…YNLHCQTPPV (143 aa)) lie on the Extracellular side of the membrane. C92 and C103 form a disulfide bridge. Residues 99–203 (VGNKCFYFSG…SYINRMWICS (105 aa)) form the C-type lectin domain. Residue N112 is glycosylated (N-linked (GlcNAc...) asparagine). A disulfide bridge connects residues C120 and C202.

As to expression, detected in osteoblasts, growth plate chondrocytes and skeletal muscle overlying the bone (at protein level). Detected in spleen, B-cells, dendritic cells, thymus, and in IL2-activated natural killer cells.

The protein localises to the cell membrane. Inhibits osteoclast formation. Receptor for KLRB1F. Enhances T-cell activation. Plays a role in splenocyte activation, T-cell responses and IL-2 production. In Mus musculus (Mouse), this protein is C-type lectin domain family 2 member I (Clec2i).